The sequence spans 51 residues: Large ribosomal subunit protein eL39 (51 aa).

The span at 1–15 (MPSHKSFRTKQKLAK) shows a compositional bias: basic residues. The disordered stretch occupies residues 1–21 (MPSHKSFRTKQKLAKAARQNR).

The protein belongs to the eukaryotic ribosomal protein eL39 family. In terms of assembly, component of the large ribosomal subunit (LSU). Mature yeast ribosomes consist of a small (40S) and a large (60S) subunit. The 40S small subunit contains 1 molecule of ribosomal RNA (18S rRNA) and at least 33 different proteins. The large 60S subunit contains 3 rRNA molecules (25S, 5.8S and 5S rRNA) and at least 46 different proteins. eL39 interacts with yih1.

The protein localises to the cytoplasm. In terms of biological role, component of the ribosome, a large ribonucleoprotein complex responsible for the synthesis of proteins in the cell. The small ribosomal subunit (SSU) binds messenger RNAs (mRNAs) and translates the encoded message by selecting cognate aminoacyl-transfer RNA (tRNA) molecules. The large subunit (LSU) contains the ribosomal catalytic site termed the peptidyl transferase center (PTC), which catalyzes the formation of peptide bonds, thereby polymerizing the amino acids delivered by tRNAs into a polypeptide chain. The nascent polypeptides leave the ribosome through a tunnel in the LSU and interact with protein factors that function in enzymatic processing, targeting, and the membrane insertion of nascent chains at the exit of the ribosomal tunnel. The sequence is that of Large ribosomal subunit protein eL39 (rpl39) from Schizosaccharomyces pombe (strain 972 / ATCC 24843) (Fission yeast).